An 87-amino-acid chain; its full sequence is Translation initiation factor IF-1 2 (87 aa).

The 72-residue stretch at 1–72 (MAKEEVIEME…TKGRINFRHK (72 aa)) folds into the S1-like domain.

The protein belongs to the IF-1 family. Component of the 30S ribosomal translation pre-initiation complex which assembles on the 30S ribosome in the order IF-2 and IF-3, IF-1 and N-formylmethionyl-tRNA(fMet); mRNA recruitment can occur at any time during PIC assembly.

The protein localises to the cytoplasm. One of the essential components for the initiation of protein synthesis. Stabilizes the binding of IF-2 and IF-3 on the 30S subunit to which N-formylmethionyl-tRNA(fMet) subsequently binds. Helps modulate mRNA selection, yielding the 30S pre-initiation complex (PIC). Upon addition of the 50S ribosomal subunit IF-1, IF-2 and IF-3 are released leaving the mature 70S translation initiation complex. This Thiobacillus denitrificans (strain ATCC 25259 / T1) protein is Translation initiation factor IF-1 2.